The chain runs to 380 residues: Queuine tRNA-ribosyltransferase (380 aa).

The active-site Proton acceptor is Asp96. Substrate contacts are provided by residues 96-100 (DSGGF), Asp150, Gln193, and Gly220. The RNA binding stretch occupies residues 251 to 257 (GVGAPDS). The Nucleophile role is filled by Asp270. The segment at 275–279 (TRIAR) is RNA binding; important for wobble base 34 recognition. Positions 308, 310, 313, and 339 each coordinate Zn(2+).

Belongs to the queuine tRNA-ribosyltransferase family. Homodimer. Within each dimer, one monomer is responsible for RNA recognition and catalysis, while the other monomer binds to the replacement base PreQ1. Zn(2+) serves as cofactor.

It carries out the reaction 7-aminomethyl-7-carbaguanine + guanosine(34) in tRNA = 7-aminomethyl-7-carbaguanosine(34) in tRNA + guanine. It participates in tRNA modification; tRNA-queuosine biosynthesis. Functionally, catalyzes the base-exchange of a guanine (G) residue with the queuine precursor 7-aminomethyl-7-deazaguanine (PreQ1) at position 34 (anticodon wobble position) in tRNAs with GU(N) anticodons (tRNA-Asp, -Asn, -His and -Tyr). Catalysis occurs through a double-displacement mechanism. The nucleophile active site attacks the C1' of nucleotide 34 to detach the guanine base from the RNA, forming a covalent enzyme-RNA intermediate. The proton acceptor active site deprotonates the incoming PreQ1, allowing a nucleophilic attack on the C1' of the ribose to form the product. After dissociation, two additional enzymatic reactions on the tRNA convert PreQ1 to queuine (Q), resulting in the hypermodified nucleoside queuosine (7-(((4,5-cis-dihydroxy-2-cyclopenten-1-yl)amino)methyl)-7-deazaguanosine). This chain is Queuine tRNA-ribosyltransferase, found in Streptococcus gordonii (strain Challis / ATCC 35105 / BCRC 15272 / CH1 / DL1 / V288).